A 452-amino-acid polypeptide reads, in one-letter code: Tripartite motif-containing protein 51 (452 aa).

The RING-type zinc-finger motif lies at Cys-15 to Lys-56. The B box-type zinc finger occupies Ser-88–Ile-129. Positions 93, 96, 115, and 121 each coordinate Zn(2+). Positions Glu-269 to Phe-452 constitute a B30.2/SPRY domain.

This sequence belongs to the TRIM/RBCC family.

The polypeptide is Tripartite motif-containing protein 51 (TRIM51) (Homo sapiens (Human)).